The primary structure comprises 144 residues: Nucleoside diphosphate kinase (144 aa).

ATP-binding residues include lysine 9, phenylalanine 57, arginine 85, threonine 91, arginine 102, and asparagine 112. Histidine 115 acts as the Pros-phosphohistidine intermediate in catalysis.

This sequence belongs to the NDK family. In terms of assembly, homotetramer. Requires Mg(2+) as cofactor.

The protein localises to the cytoplasm. The enzyme catalyses a 2'-deoxyribonucleoside 5'-diphosphate + ATP = a 2'-deoxyribonucleoside 5'-triphosphate + ADP. It carries out the reaction a ribonucleoside 5'-diphosphate + ATP = a ribonucleoside 5'-triphosphate + ADP. Its function is as follows. Major role in the synthesis of nucleoside triphosphates other than ATP. The ATP gamma phosphate is transferred to the NDP beta phosphate via a ping-pong mechanism, using a phosphorylated active-site intermediate. This is Nucleoside diphosphate kinase from Chlamydia pneumoniae (Chlamydophila pneumoniae).